The sequence spans 599 residues: Nucleosomal histone kinase 1 (599 aa).

The Protein kinase domain occupies W47–F328. ATP-binding positions include I53–I61 and K77. Catalysis depends on D183, which acts as the Proton acceptor. Disordered regions lie at residues N340 to R507 and R532 to G599. Positions P349–G361 are enriched in polar residues. 5 positions are modified to phosphoserine: S376, S381, S382, S388, and S390. Basic and acidic residues predominate over residues V435 to T448. At S483 the chain carries Phosphoserine. The segment covering S546–S558 has biased composition (low complexity). A phosphoserine mark is found at S564 and S586. Phosphothreonine is present on T589.

It belongs to the protein kinase superfamily. CK1 Ser/Thr protein kinase family. VRK subfamily. In terms of assembly, may interact with Unc-89 (via protein kinase domain 1). Interacts with L(2)gl. The cofactor is Mg(2+). In terms of processing, phosphorylated during mitosis and female meiosis. As to expression, expressed in ovaries (at protein level). Expressed in indirect flight muscle (IFM) (at protein level).

It is found in the cytoplasm. Its subcellular location is the nucleus. It localises to the chromosome. The protein resides in the myofibril. The protein localises to the sarcomere. It is found in the z line. Its subcellular location is the m line. It catalyses the reaction L-seryl-[protein] + ATP = O-phospho-L-seryl-[protein] + ADP + H(+). The enzyme catalyses L-threonyl-[protein] + ATP = O-phospho-L-threonyl-[protein] + ADP + H(+). Functionally, serine/threonine-protein kinase involved in somatic mitosis and female meiosis. Required for spindle organization in mitosis, and for the establishment or maintenance of meiosis-specific chromosomal configurations, including the prophase I karyosome and the metaphase I spindle. Specifically phosphorylates nucleosomal H2A on 'Thr-119'. Required for the development and organization of indirect flight muscle sarcomeres by regulating the formation of M line and H zone and the correct assembly of thick and thin filaments in the sarcomere. The protein is Nucleosomal histone kinase 1 (ball) of Drosophila melanogaster (Fruit fly).